Reading from the N-terminus, the 334-residue chain is Beta-hexosaminidase (334 aa).

Substrate-binding positions include Asp62, Arg70, Arg131, and 161 to 162; that span reads KH. Catalysis depends on His174, which acts as the Proton donor/acceptor. The active-site Nucleophile is the Asp246.

This sequence belongs to the glycosyl hydrolase 3 family. NagZ subfamily.

It localises to the cytoplasm. It catalyses the reaction Hydrolysis of terminal non-reducing N-acetyl-D-hexosamine residues in N-acetyl-beta-D-hexosaminides.. The protein operates within cell wall biogenesis; peptidoglycan recycling. Functionally, plays a role in peptidoglycan recycling by cleaving the terminal beta-1,4-linked N-acetylglucosamine (GlcNAc) from peptide-linked peptidoglycan fragments, giving rise to free GlcNAc, anhydro-N-acetylmuramic acid and anhydro-N-acetylmuramic acid-linked peptides. The polypeptide is Beta-hexosaminidase (Tolumonas auensis (strain DSM 9187 / NBRC 110442 / TA 4)).